The sequence spans 71 residues: Brevinin-1SN1 (71 aa).

Positions 1 to 22 (MFTMKKPLLLLFFLGTINLSLC) are cleaved as a signal peptide. Residues 23-45 (EEERNADEEEKRDGDDEMDAEVE) constitute a propeptide, removed in mature form. C65 and C71 are disulfide-bonded.

This sequence belongs to the frog skin active peptide (FSAP) family. Brevinin subfamily. In terms of tissue distribution, expressed by the skin glands.

It localises to the secreted. Its function is as follows. Antimicrobial peptide. Active against some Gram-negative and a variety of Gram-positive bacterial strains. Active against fungus C.glabrata 090902 but not against C.albicans ATCC 10231. Shows hemolytic activity against human erythrocytes. This chain is Brevinin-1SN1, found in Sylvirana spinulosa (Fine-spined frog).